The following is a 420-amino-acid chain: UPF0229 protein LPC_3097 (420 aa).

Residues 83–107 (IAGDRIKRPGGGAGGAGGNASDSGE) form a disordered region. Gly residues predominate over residues 91–100 (PGGGAGGAGG).

It belongs to the UPF0229 family.

This is UPF0229 protein LPC_3097 from Legionella pneumophila (strain Corby).